The primary structure comprises 375 residues: MTEPIESIEVSLGDRSYPIWISTGLTESAEQPHFAKHFQAAVGDCTHVVLIHDAAVSNTIASRVEKQLEQAGIRITSISIPSGETSKSVSKLESIWNVMLESGTDRRSVVVAVGGGVVGDLAGFAAASFTRGLRFVQVPTTLLSMVDSSVGGKTGINLPGGKNMVGSFWQPQMVWIDTQSLSTLPDRDFISGMAEVIKYGVIEDAEFFCWLQDKAARLIEKDPETLRYAIRKSCESKARVVAEDERETSGRRAILNYGHTFAHAIEATAGYGVCLHGEAVSIGMQMAAHLAIDMELCDRSLLEEQTAVLSAAKLPLAWKDADPEKMLPVMSHDKKVSHGKLRFVLPDRIGHVAMVGDVPSEKVIAAILACRDEPN.

NAD(+) contacts are provided by residues 82 to 87 (SGETSK), 116 to 120 (GVVGD), 140 to 141 (TT), Lys-153, and Lys-162. The Zn(2+) site is built by Glu-195, His-259, and His-276.

This sequence belongs to the sugar phosphate cyclases superfamily. Dehydroquinate synthase family. NAD(+) serves as cofactor. It depends on Co(2+) as a cofactor. Requires Zn(2+) as cofactor.

Its subcellular location is the cytoplasm. It catalyses the reaction 7-phospho-2-dehydro-3-deoxy-D-arabino-heptonate = 3-dehydroquinate + phosphate. The protein operates within metabolic intermediate biosynthesis; chorismate biosynthesis; chorismate from D-erythrose 4-phosphate and phosphoenolpyruvate: step 2/7. In terms of biological role, catalyzes the conversion of 3-deoxy-D-arabino-heptulosonate 7-phosphate (DAHP) to dehydroquinate (DHQ). In Rhodopirellula baltica (strain DSM 10527 / NCIMB 13988 / SH1), this protein is 3-dehydroquinate synthase.